A 125-amino-acid chain; its full sequence is Small ribosomal subunit protein uS11m (125 aa).

Belongs to the universal ribosomal protein uS11 family.

The protein resides in the mitochondrion. The polypeptide is Small ribosomal subunit protein uS11m (RPS11) (Marchantia polymorpha (Common liverwort)).